The chain runs to 270 residues: ATP synthase subunit a (270 aa).

The next 7 membrane-spanning stretches (helical) occupy residues 29–49 (VDTFSISLVLGFLFAAVFAMV), 87–107 (IAPLALTIFCWVFLMNFMDLF), 108–128 (PVDLFPMAAQWIGYTFFGLEP), 140–160 (DVNATFAMSLSVLILIVGFSI), 182–202 (PVGAIILAPLNFAFQLVELAA), 220–240 (LIFILIALLPWGLQWVLGAPW), and 241–261 (AIFHILIITLQAFVFMMLTIV).

This sequence belongs to the ATPase A chain family. As to quaternary structure, F-type ATPases have 2 components, CF(1) - the catalytic core - and CF(0) - the membrane proton channel. CF(1) has five subunits: alpha(3), beta(3), gamma(1), delta(1), epsilon(1). CF(0) has three main subunits: a(1), b(2) and c(9-12). The alpha and beta chains form an alternating ring which encloses part of the gamma chain. CF(1) is attached to CF(0) by a central stalk formed by the gamma and epsilon chains, while a peripheral stalk is formed by the delta and b chains.

It is found in the cell inner membrane. In terms of biological role, key component of the proton channel; it plays a direct role in the translocation of protons across the membrane. The protein is ATP synthase subunit a of Chromobacterium violaceum (strain ATCC 12472 / DSM 30191 / JCM 1249 / CCUG 213 / NBRC 12614 / NCIMB 9131 / NCTC 9757 / MK).